Consider the following 337-residue polypeptide: Anthranilate phosphoribosyltransferase (337 aa).

5-phospho-alpha-D-ribose 1-diphosphate-binding positions include Gly-81, 84 to 85 (GD), Thr-89, 91 to 94 (NIST), 109 to 117 (KHGNRALSS), and Thr-121. Gly-81 is a binding site for anthranilate. Ser-93 is a Mg(2+) binding site. Asn-112 is an anthranilate binding site. Arg-167 serves as a coordination point for anthranilate. Positions 225 and 226 each coordinate Mg(2+).

This sequence belongs to the anthranilate phosphoribosyltransferase family. In terms of assembly, homodimer. It depends on Mg(2+) as a cofactor.

It catalyses the reaction N-(5-phospho-beta-D-ribosyl)anthranilate + diphosphate = 5-phospho-alpha-D-ribose 1-diphosphate + anthranilate. It functions in the pathway amino-acid biosynthesis; L-tryptophan biosynthesis; L-tryptophan from chorismate: step 2/5. Its function is as follows. Catalyzes the transfer of the phosphoribosyl group of 5-phosphorylribose-1-pyrophosphate (PRPP) to anthranilate to yield N-(5'-phosphoribosyl)-anthranilate (PRA). The chain is Anthranilate phosphoribosyltransferase from Rhizobium meliloti (strain 1021) (Ensifer meliloti).